Here is a 493-residue protein sequence, read N- to C-terminus: Glutamyl-tRNA(Gln) amidotransferase subunit A (493 aa).

Residues lysine 79 and serine 159 each act as charge relay system in the active site. Serine 183 functions as the Acyl-ester intermediate in the catalytic mechanism.

The protein belongs to the amidase family. GatA subfamily. Heterotrimer of A, B and C subunits.

It catalyses the reaction L-glutamyl-tRNA(Gln) + L-glutamine + ATP + H2O = L-glutaminyl-tRNA(Gln) + L-glutamate + ADP + phosphate + H(+). Functionally, allows the formation of correctly charged Gln-tRNA(Gln) through the transamidation of misacylated Glu-tRNA(Gln) in organisms which lack glutaminyl-tRNA synthetase. The reaction takes place in the presence of glutamine and ATP through an activated gamma-phospho-Glu-tRNA(Gln). The protein is Glutamyl-tRNA(Gln) amidotransferase subunit A of Brucella suis biovar 1 (strain 1330).